Consider the following 84-residue polypeptide: Cytochrome b559 subunit alpha (84 aa).

A helical membrane pass occupies residues 22–36; sequence IIHIPAITILFASGF. Position 24 (His24) interacts with heme.

The protein belongs to the PsbE/PsbF family. In terms of assembly, heterodimer of an alpha subunit and a beta subunit. PSII is composed of 1 copy each of membrane proteins PsbA, PsbB, PsbC, PsbD, PsbE, PsbF, PsbH, PsbI, PsbJ, PsbK, PsbL, PsbM, PsbT, PsbX, Psb30/Ycf12, peripheral proteins PsbO, CyanoQ (PsbQ), PsbU, PsbV and a large number of cofactors. It forms dimeric complexes. Heme b serves as cofactor.

It localises to the cell inner membrane. This b-type cytochrome is tightly associated with the reaction center of photosystem II (PSII). PSII is a light-driven water:plastoquinone oxidoreductase that uses light energy to abstract electrons from H(2)O, generating O(2) and a proton gradient subsequently used for ATP formation. It consists of a core antenna complex that captures photons, and an electron transfer chain that converts photonic excitation into a charge separation. The sequence is that of Cytochrome b559 subunit alpha from Gloeobacter violaceus (strain ATCC 29082 / PCC 7421).